A 114-amino-acid chain; its full sequence is Non-specific lipid-transfer protein 2 (114 aa).

The N-terminal stretch at 1–23 is a signal peptide; the sequence is MEMVNKIACFVLLCMVVVAPHAE. Intrachain disulfides connect Cys-27-Cys-73, Cys-37-Cys-50, Cys-51-Cys-96, and Cys-71-Cys-110.

The protein belongs to the plant LTP family.

Functionally, plant non-specific lipid-transfer proteins transfer phospholipids as well as galactolipids across membranes. May play a role in wax or cutin deposition in the cell walls of expanding epidermal cells and certain secretory tissues. The sequence is that of Non-specific lipid-transfer protein 2 (LTP2) from Solanum pennellii (Tomato).